Reading from the N-terminus, the 319-residue chain is 4-diphosphocytidyl-2-C-methyl-D-erythritol kinase (319 aa).

Residue lysine 21 is part of the active site. An ATP-binding site is contributed by 106 to 116; that stretch reads PIGAGLAGGSS. The active site involves aspartate 148.

The protein belongs to the GHMP kinase family. IspE subfamily.

The catalysed reaction is 4-CDP-2-C-methyl-D-erythritol + ATP = 4-CDP-2-C-methyl-D-erythritol 2-phosphate + ADP + H(+). It participates in isoprenoid biosynthesis; isopentenyl diphosphate biosynthesis via DXP pathway; isopentenyl diphosphate from 1-deoxy-D-xylulose 5-phosphate: step 3/6. Its function is as follows. Catalyzes the phosphorylation of the position 2 hydroxy group of 4-diphosphocytidyl-2C-methyl-D-erythritol. The protein is 4-diphosphocytidyl-2-C-methyl-D-erythritol kinase of Prochlorococcus marinus (strain MIT 9303).